The primary structure comprises 476 residues: H2.0-like homeobox protein (476 aa).

3 disordered regions span residues 121–170 (HLPQ…SSKD), 328–401 (WRHS…HQTT), and 413–476 (TASS…LAGL). The span at 158–168 (HHSGSAPAPSS) shows a compositional bias: low complexity. Positions 273 to 332 (RSWSRAVFSNLQRKGLEKRFEIQKYVTKPDRKQLAAMLGLTDAQVKVWFQNRRMKWRHSK) form a DNA-binding region, homeobox. Composition is skewed to basic and acidic residues over residues 331–346 (SKEAQAQKDKDKEAGE) and 355–368 (EGEREERSPSRSEG). Positions 369–379 (EAESESSDSES) are enriched in acidic residues. Basic and acidic residues predominate over residues 386 to 397 (DTERTEGTERSL). Residues 413-446 (TASSSASGSSFSFSSSSSLGSSNGSAGSASSLGS) are compositionally biased toward low complexity. Over residues 455 to 464 (HQPSVTSGPQ) the composition is skewed to polar residues.

It belongs to the H2.0 homeobox family.

It localises to the nucleus. Its function is as follows. Transcription factor required for TBX21/T-bet-dependent maturation of Th1 cells as well as maintenance of Th1-specific gene expression. Involved in embryogenesis and hematopoiesis. The chain is H2.0-like homeobox protein (Hlx) from Rattus norvegicus (Rat).